The following is a 288-amino-acid chain: Small ribosomal subunit protein uS2 (288 aa).

The interval 228–288 is disordered; the sequence is RAGLSSDKDA…PAAEAPSTEA (61 aa). Residues 257 to 288 are compositionally biased toward low complexity; it reads QAAPAAEAAPAAEAQAAPAAEAPAAEAPSTEA.

The protein belongs to the universal ribosomal protein uS2 family.

This is Small ribosomal subunit protein uS2 from Rhodococcus opacus (strain B4).